A 75-amino-acid chain; its full sequence is Putative membrane protein insertion efficiency factor (75 aa).

The protein belongs to the UPF0161 family.

The protein resides in the cell membrane. Functionally, could be involved in insertion of integral membrane proteins into the membrane. This Bacillus velezensis (strain DSM 23117 / BGSC 10A6 / LMG 26770 / FZB42) (Bacillus amyloliquefaciens subsp. plantarum) protein is Putative membrane protein insertion efficiency factor.